Reading from the N-terminus, the 431-residue chain is Tyrosine--tRNA ligase (431 aa).

Tyr34 is an L-tyrosine binding site. Positions 39 to 48 match the 'HIGH' region motif; sequence PTADSLHIGH. Residues Tyr171 and Gln175 each contribute to the L-tyrosine site. The 'KMSKS' region signature appears at 231-235; that stretch reads KFGKT. Lys234 contacts ATP. The S4 RNA-binding domain maps to 353–422; that stretch reads INVVEALVKT…GKYTILRRGK (70 aa).

It belongs to the class-I aminoacyl-tRNA synthetase family. TyrS type 1 subfamily. In terms of assembly, homodimer.

The protein localises to the cytoplasm. The enzyme catalyses tRNA(Tyr) + L-tyrosine + ATP = L-tyrosyl-tRNA(Tyr) + AMP + diphosphate + H(+). In terms of biological role, catalyzes the attachment of tyrosine to tRNA(Tyr) in a two-step reaction: tyrosine is first activated by ATP to form Tyr-AMP and then transferred to the acceptor end of tRNA(Tyr). This is Tyrosine--tRNA ligase from Neisseria meningitidis serogroup C (strain 053442).